Reading from the N-terminus, the 1077-residue chain is Endo-1,4-beta-xylanase Y (1077 aa).

Residues 1 to 26 (MKNKRVLAKITALVVLLGVFFVLPSN) form the signal peptide. The region spanning 33 to 180 (DYEVVHDTFE…IFDDVTITRK (148 aa)) is the CBM-cenC 1 domain. Residues 189–538 (YAANAVLKDM…KPAYNAVASI (350 aa)) form the GH10 domain. The active-site Proton donor is Glu-337. Catalysis depends on Glu-460, which acts as the Nucleophile. The disordered stretch occupies residues 543–563 (EWGDGNNPAGGGGGGKPEEPD). The region spanning 565–714 (NGYYYHDTFE…YIDEAIGAVA (150 aa)) is the CBM-cenC 2 domain. In terms of domain architecture, Dockerin spans 728–796 (PPVLLGDVNG…LLRVIDKFPV (69 aa)).

Belongs to the glycosyl hydrolase 10 (cellulase F) family.

The catalysed reaction is Endohydrolysis of (1-&gt;4)-beta-D-xylosidic linkages in xylans.. This is Endo-1,4-beta-xylanase Y (xynY) from Acetivibrio thermocellus (Hungateiclostridium thermocellum).